The chain runs to 449 residues: Heterogeneous nuclear ribonucleoprotein H2 (449 aa).

An N-acetylmethionine modification is found at M1. The residue at position 2 (M2) is an N-acetylmethionine; in Heterogeneous nuclear ribonucleoprotein H2, N-terminally processed. Residues 11–90 (FVVKVRGLPW…RYVEVFKSNS (80 aa)) form the RRM 1 domain. S23 is modified (phosphoserine). A Glycyl lysine isopeptide (Lys-Gly) (interchain with G-Cter in SUMO2) cross-link involves residue K35. A phosphoserine mark is found at S54 and S63. Residue K87 forms a Glycyl lysine isopeptide (Lys-Gly) (interchain with G-Cter in SUMO2) linkage. At S90 the chain carries Phosphoserine. K98 is covalently cross-linked (Glycyl lysine isopeptide (Lys-Gly) (interchain with G-Cter in SUMO2)). The RRM 2 domain maps to 111-188 (GFVRLRGLPF…RYIEIFKSSR (78 aa)). At R233 the chain carries Dimethylated arginine; alternate. At R233 the chain carries Omega-N-methylarginine; alternate. The stretch at 234–249 (GAYGGGYGGYDDYGGY) is one 1-1 repeat. Residues 234 to 433 (GAYGGGYGGY…YGGQSSMSGY (200 aa)) are 2 X 16 AA Gly-rich approximate repeats. A Phosphotyrosine modification is found at Y246. An RRM 3 domain is found at 289-364 (HCVHMRGLPY…RYVELFLNST (76 aa)). S310 is modified (phosphoserine). 3 repeat units span residues 354–372 (HRYV…GGAY), 374–392 (HSYV…GGAY), and 418–433 (AGYG…MSGY). Residues 354–392 (HRYVELFLNSTAGTSGGAYDHSYVELFLNSTAGASGGAY) form a 2 X 19 AA perfect repeats region.

Component of a ribonucleoprotein complex containing mRNAs and RNA-binding proteins including DDX5, HNRNPH2 and SRSF1 as well as splicing regulator ARVCF. Interacts with TXNL4/DIM1.

It localises to the nucleus. The protein resides in the nucleoplasm. In terms of biological role, this protein is a component of the heterogeneous nuclear ribonucleoprotein (hnRNP) complexes which provide the substrate for the processing events that pre-mRNAs undergo before becoming functional, translatable mRNAs in the cytoplasm. Binds poly(RG). The sequence is that of Heterogeneous nuclear ribonucleoprotein H2 (Hnrnph2) from Rattus norvegicus (Rat).